We begin with the raw amino-acid sequence, 561 residues long: MKKVWLNRYPADVPTEINPDRYQSLVDMFEQSVARYADQPAFVNMGEVMTFRKLEERSRAFAAYLQQGLGLKKGDRVALMMPNLLQYPVALFGILRAGMIVVNVNPLYTPRELEHQLNDSGASAIVIVSNFAHTLEKVVDKTAVQHVILTRMGDQLSTAKGTVVNFVVKYIKRLVPKYHLPDAISFRSALHNGYRMQYVKPELVPEDLAFLQYTGGTTGVAKGAMLTHRNMLANLEQVNATYGPLLHPGKELVVTALPLYHIFALTINCLLFIELGGQNLLITNPRDIPGLVKELAKYPFTAITGVNTLFNALLNNKEFQQLDFSSLHLSAGGGMPVQQVVAERWVKLTGQYLLEGYGLTECAPLVSVNPYDIDYHSGSIGLPVPSTEAKLVDDDDNEVPPGQPGELCVKGPQVMLGYWQRPDATDEIIKNGWLHTGDIAVMDEEGFLRIVDRKKDMILVSGFNVYPNEIEDVVMQHPGVQEVAAVGVPSGSSGEAVKIFVVKKDPSLTEESLVTFCRRQLTGYKVPKLVEFRDELPKSNVGKILRRELRDEARGKVDNKA.

213 to 224 (YTGGTTGVAKGA) is an ATP binding site.

It belongs to the ATP-dependent AMP-binding enzyme family. Mg(2+) is required as a cofactor.

It is found in the membrane. It catalyses the reaction a long-chain fatty acid + ATP + CoA = a long-chain fatty acyl-CoA + AMP + diphosphate. The protein operates within lipid metabolism; fatty acid beta-oxidation. Functionally, catalyzes the esterification, concomitant with transport, of exogenous long-chain fatty acids into metabolically active CoA thioesters for subsequent degradation or incorporation into phospholipids. This chain is Long-chain-fatty-acid--CoA ligase (fadD), found in Escherichia coli O6:H1 (strain CFT073 / ATCC 700928 / UPEC).